The sequence spans 80 residues: Exodeoxyribonuclease 7 small subunit (80 aa).

It belongs to the XseB family. Heterooligomer composed of large and small subunits.

The protein localises to the cytoplasm. It catalyses the reaction Exonucleolytic cleavage in either 5'- to 3'- or 3'- to 5'-direction to yield nucleoside 5'-phosphates.. Functionally, bidirectionally degrades single-stranded DNA into large acid-insoluble oligonucleotides, which are then degraded further into small acid-soluble oligonucleotides. This is Exodeoxyribonuclease 7 small subunit from Vibrio atlanticus (strain LGP32) (Vibrio splendidus (strain Mel32)).